Here is a 264-residue protein sequence, read N- to C-terminus: Tritrans,polycis-undecaprenyl-diphosphate synthase (geranylgeranyl-diphosphate specific) (264 aa).

Residue Asp-43 is part of the active site. Residue Asp-43 coordinates Mg(2+). Substrate is bound by residues 44–47 (GNRR), Trp-48, His-60, and 88–90 (STE). Asn-91 (proton acceptor) is an active-site residue. Substrate contacts are provided by residues Phe-92, Arg-94, Arg-213, and 219-221 (RIS). A Mg(2+)-binding site is contributed by Glu-232.

It belongs to the UPP synthase family. As to quaternary structure, homodimer. Mg(2+) is required as a cofactor.

It carries out the reaction geranylgeranyl diphosphate + 7 isopentenyl diphosphate = tri-trans,hepta-cis-undecaprenyl diphosphate + 7 diphosphate. Functionally, catalyzes the sequential condensation of isopentenyl diphosphate (IPP) with geranylgeranyl diphosphate (GGPP) to yield (2Z,6Z,10Z,14Z,18Z,22Z,26Z,30E,34E,38E)-undecaprenyl diphosphate (tritrans,heptacis-UPP). It is probably the precursor of glycosyl carrier lipids. This Thermococcus kodakarensis (strain ATCC BAA-918 / JCM 12380 / KOD1) (Pyrococcus kodakaraensis (strain KOD1)) protein is Tritrans,polycis-undecaprenyl-diphosphate synthase (geranylgeranyl-diphosphate specific).